The sequence spans 94 residues: Selenoprotein K (94 aa).

The helical transmembrane segment at 20 to 42 (LSLITDFFWGIAEFVVLFFKTLL) threads the bilayer. The disordered stretch occupies residues 47–94 (KKGRGYRNSSDSRYDDGRGPPGNPPRRMGRISHLHGPSPPPMAGGUGR). U92 is a non-standard amino acid (selenocysteine).

It belongs to the selenoprotein K family. In terms of assembly, interacts with DERL1, DERL2, DERL3 and SELENOS. The SELENOK-SELENOS complex interacts with VCP. Interacts with ZDHHC6. Post-translationally, cleaved by CAPN2/m-calpain in resting macrophages but not in activated macrophages. Macrophage activation up-regulates expression of the calpain inhibitor CAST/calpastatin, resulting in inhibition of CAPN2 activity. In terms of processing, truncated SELENOK proteins produced by failed UGA/Sec decoding are ubiquitinated by the CRL2(KLHDC2) complex, which recognizes the diglycine (Gly-Gly) at the C-terminus of truncated SELENOK proteins.

It is found in the endoplasmic reticulum membrane. Its subcellular location is the cell membrane. Functionally, required for Ca(2+) flux in immune cells and plays a role in T-cell proliferation and in T-cell and neutrophil migration. Involved in endoplasmic reticulum-associated degradation (ERAD) of soluble glycosylated proteins. Required for palmitoylation and cell surface expression of CD36 and involved in macrophage uptake of low-density lipoprotein and in foam cell formation. Together with ZDHHC6, required for palmitoylation of ITPR1 in immune cells, leading to regulate ITPR1 stability and function. Plays a role in protection of cells from ER stress-induced apoptosis. Protects cells from oxidative stress when overexpressed in cardiomyocytes. The protein is Selenoprotein K of Chinchilla lanigera (Long-tailed chinchilla).